A 118-amino-acid chain; its full sequence is Large ribosomal subunit protein eL18 (118 aa).

It belongs to the eukaryotic ribosomal protein eL18 family.

The protein is Large ribosomal subunit protein eL18 (rpl18e) of Sulfolobus acidocaldarius (strain ATCC 33909 / DSM 639 / JCM 8929 / NBRC 15157 / NCIMB 11770).